The chain runs to 92 residues: Transcription factor PRE5 (92 aa).

One can recognise a bHLH domain in the interval 4–59; that stretch reads RRSRQTSNASRISDDQMIDLVSKLRQFLPEIHERRRSDKVSASKVLQETCNYIRKL.

The protein belongs to the bHLH protein family. As to quaternary structure, interacts with IBH1.

The protein localises to the nucleus. Functionally, atypical and probable non DNA-binding bHLH transcription factor that integrates multiple signaling pathways to regulate cell elongation and plant development. May have a regulatory role in various aspects of gibberellin-dependent growth and development. In Arabidopsis thaliana (Mouse-ear cress), this protein is Transcription factor PRE5 (PRE5).